Here is a 331-residue protein sequence, read N- to C-terminus: Probable zinc-binding oxidoreductase, mitochondrial (331 aa).

A compositionally biased stretch (polar residues) spans 1–29; that stretch reads MASVTSVPKTGRSVNQDVPATTLTLQTRP. The segment at 1–34 is disordered; it reads MASVTSVPKTGRSVNQDVPATTLTLQTRPTPAPN.

This sequence belongs to the zinc-containing alcohol dehydrogenase family. Quinone oxidoreductase subfamily.

It is found in the mitochondrion. In Arthroderma benhamiae (strain ATCC MYA-4681 / CBS 112371) (Trichophyton mentagrophytes), this protein is Probable zinc-binding oxidoreductase, mitochondrial.